The sequence spans 599 residues: Elongation factor 4 (599 aa).

One can recognise a tr-type G domain in the interval 5–187; the sequence is SHIRNFSIIA…RLVHTIPAPE (183 aa). GTP contacts are provided by residues 17–22 and 134–137; these read DHGKST and NKMD.

This sequence belongs to the TRAFAC class translation factor GTPase superfamily. Classic translation factor GTPase family. LepA subfamily.

It is found in the cell inner membrane. The catalysed reaction is GTP + H2O = GDP + phosphate + H(+). Functionally, required for accurate and efficient protein synthesis under certain stress conditions. May act as a fidelity factor of the translation reaction, by catalyzing a one-codon backward translocation of tRNAs on improperly translocated ribosomes. Back-translocation proceeds from a post-translocation (POST) complex to a pre-translocation (PRE) complex, thus giving elongation factor G a second chance to translocate the tRNAs correctly. Binds to ribosomes in a GTP-dependent manner. The sequence is that of Elongation factor 4 from Pseudomonas putida (strain ATCC 47054 / DSM 6125 / CFBP 8728 / NCIMB 11950 / KT2440).